Reading from the N-terminus, the 87-residue chain is Small ribosomal subunit protein bS20 (87 aa).

The segment covering 1-27 (MANIKSAKKRALQSERRRQHNASRRSM) has biased composition (basic residues). The tract at residues 1 to 31 (MANIKSAKKRALQSERRRQHNASRRSMTRTS) is disordered.

It belongs to the bacterial ribosomal protein bS20 family.

In terms of biological role, binds directly to 16S ribosomal RNA. This chain is Small ribosomal subunit protein bS20, found in Pseudoalteromonas atlantica (strain T6c / ATCC BAA-1087).